We begin with the raw amino-acid sequence, 444 residues long: N-succinylarginine dihydrolase (444 aa).

Residues 19–28, asparagine 110, and 137–138 contribute to the substrate site; these read SGLSFGNVAS and HR. The active site involves glutamate 174. Arginine 214 is a binding site for substrate. Histidine 250 is an active-site residue. Substrate is bound by residues aspartate 252 and asparagine 362. The Nucleophile role is filled by cysteine 368.

The protein belongs to the succinylarginine dihydrolase family. Homodimer.

It catalyses the reaction N(2)-succinyl-L-arginine + 2 H2O + 2 H(+) = N(2)-succinyl-L-ornithine + 2 NH4(+) + CO2. It participates in amino-acid degradation; L-arginine degradation via AST pathway; L-glutamate and succinate from L-arginine: step 2/5. In terms of biological role, catalyzes the hydrolysis of N(2)-succinylarginine into N(2)-succinylornithine, ammonia and CO(2). The chain is N-succinylarginine dihydrolase from Photobacterium profundum (strain SS9).